We begin with the raw amino-acid sequence, 149 residues long: FAD synthase (149 aa).

Residues 15-16, 20-23, and Asp101 each bind ATP; these read VF and HVGH.

Belongs to the archaeal FAD synthase family. Homodimer. A divalent metal cation is required as a cofactor.

It carries out the reaction FMN + ATP + H(+) = FAD + diphosphate. It participates in cofactor biosynthesis; FAD biosynthesis; FAD from FMN: step 1/1. Its function is as follows. Catalyzes the transfer of the AMP portion of ATP to flavin mononucleotide (FMN) to produce flavin adenine dinucleotide (FAD) coenzyme. The polypeptide is FAD synthase (Thermococcus kodakarensis (strain ATCC BAA-918 / JCM 12380 / KOD1) (Pyrococcus kodakaraensis (strain KOD1))).